Reading from the N-terminus, the 186-residue chain is Alkyl hydroperoxide reductase AhpD (186 aa).

Cys132 acts as the Proton donor in catalysis. Cysteines 132 and 135 form a disulfide. Cys135 serves as the catalytic Cysteine sulfenic acid (-SOH) intermediate.

The protein belongs to the AhpD family.

It catalyses the reaction N(6)-[(R)-dihydrolipoyl]-L-lysyl-[lipoyl-carrier protein] + a hydroperoxide = N(6)-[(R)-lipoyl]-L-lysyl-[lipoyl-carrier protein] + an alcohol + H2O. In terms of biological role, antioxidant protein with alkyl hydroperoxidase activity. Required for the reduction of the AhpC active site cysteine residues and for the regeneration of the AhpC enzyme activity. The polypeptide is Alkyl hydroperoxide reductase AhpD (Anaeromyxobacter dehalogenans (strain 2CP-C)).